The sequence spans 1044 residues: Ras GTPase-activating protein 1 (1044 aa).

The residue at position 1 (Met-1) is an N-acetylmethionine. The hydrophobic stretch occupies residues Met-1–Glu-160. In terms of domain architecture, SH2 1 spans Trp-178–Val-269. Residues Glu-276–Arg-338 form the SH3 domain. An SH2 2 domain is found at Trp-348–Val-438. The PH domain maps to Asn-471–Asn-574. Residues Asn-574–Phe-687 form the C2 domain. Phosphotyrosine is present on Tyr-612. 2 repeats span residues Pro-646–Asp-664 and Pro-665–Thr-683. One can recognise a Ras-GAP domain in the interval Lys-761–Leu-971. Ser-828 is subject to Phosphoserine.

As to quaternary structure, interacts with SQSTM1. Interacts with SPSB1; the interaction does not promote degradation. Interacts with CAV2 (tyrosine phosphorylated form). Directly interacts with NCK1. Interacts with PDGFRB (tyrosine phosphorylated). Interacts (via SH2 domain) with the 'Tyr-9' phosphorylated form of PDPK1. Interacts with tyrosine-phosphorylated EPHB4. In terms of processing, phosphorylated by SRC and LCK. The phosphorylation SRC inhibits its ability to stimulate the Ras-GTPase activity, whereas phosphorylation by LCK does not display any effect on stimulation activity.

It localises to the cytoplasm. In terms of biological role, inhibitory regulator of the Ras-cyclic AMP pathway. Stimulates the GTPase of normal but not oncogenic Ras p21. This Bos taurus (Bovine) protein is Ras GTPase-activating protein 1 (RASA1).